The chain runs to 207 residues: dTTP/UTP pyrophosphatase (207 aa).

Aspartate 79 acts as the Proton acceptor in catalysis.

Belongs to the Maf family. YhdE subfamily. Requires a divalent metal cation as cofactor.

It is found in the cytoplasm. The enzyme catalyses dTTP + H2O = dTMP + diphosphate + H(+). It catalyses the reaction UTP + H2O = UMP + diphosphate + H(+). Nucleoside triphosphate pyrophosphatase that hydrolyzes dTTP and UTP. May have a dual role in cell division arrest and in preventing the incorporation of modified nucleotides into cellular nucleic acids. This Rhodopseudomonas palustris (strain BisB18) protein is dTTP/UTP pyrophosphatase.